A 221-amino-acid polypeptide reads, in one-letter code: Interleukin-12 subunit alpha (221 aa).

The first 25 residues, 1–25, serve as a signal peptide directing secretion; it reads MCPLRSLLLISTLVLLHHLPHLSLG. Cystine bridges form between Cys-39–Cys-112, Cys-66–Cys-198, and Cys-87–Cys-125. An N-linked (GlcNAc...) asparagine glycan is attached at Asn-95.

It belongs to the IL-6 superfamily. In terms of assembly, heterodimer with IL12B; disulfide-linked. This heterodimer is known as interleukin IL-12. Heterodimer with EBI3/IL27B; not disulfide-linked. This heterodimer is known as interleukin IL-35. Interacts with NBR1; this interaction promotes IL-12 secretion.

It localises to the secreted. Heterodimerizes with IL12B to form the IL-12 cytokine or with EBI3/IL27B to form the IL-35 cytokine. IL-12 is primarily produced by professional antigen-presenting cells (APCs) such as B-cells and dendritic cells (DCs) as well as macrophages and granulocytes and regulates T-cell and natural killer-cell responses, induces the production of interferon-gamma (IFN-gamma), favors the differentiation of T-helper 1 (Th1) cells and is an important link between innate resistance and adaptive immunity. Mechanistically, exerts its biological effects through a receptor composed of IL12R1 and IL12R2 subunits. Binding to the receptor results in the rapid tyrosine phosphorylation of a number of cellular substrates including the JAK family kinases TYK2 and JAK2. In turn, recruited STAT4 gets phosphorylated and translocates to the nucleus where it regulates cytokine/growth factor responsive genes. As part of IL-35, plays essential roles in maintaining the immune homeostasis of the liver microenvironment and also functions as an immune-suppressive cytokine. Mediates biological events through unconventional receptors composed of IL12RB2 and gp130/IL6ST heterodimers or homodimers. Signaling requires the transcription factors STAT1 and STAT4, which form a unique heterodimer that binds to distinct DNA sites. The chain is Interleukin-12 subunit alpha (IL12A) from Bubalus carabanensis (Swamp type water buffalo).